The sequence spans 168 residues: Transcriptional repressor NrdR (168 aa).

The segment at 3–34 (CPYCGFAQDRVVDSRESKEADSIRRRRECERC) is a zinc-finger region. The ATP-cone domain occupies 49 to 139 (YMVVKKDGRR…VYRDFKDVNE (91 aa)).

The protein belongs to the NrdR family. Requires Zn(2+) as cofactor.

Functionally, negatively regulates transcription of bacterial ribonucleotide reductase nrd genes and operons by binding to NrdR-boxes. This chain is Transcriptional repressor NrdR, found in Acidobacterium capsulatum (strain ATCC 51196 / DSM 11244 / BCRC 80197 / JCM 7670 / NBRC 15755 / NCIMB 13165 / 161).